A 177-amino-acid chain; its full sequence is MFNIDEFKEIAEKLPTFKSLPNEGKYRTAIGRYYYCIFLKLREIVKEIEQDREDGIYELLNSGKAHKALPAYFRTLSDKIRVDNLKNDLITLAEALEDLRKLRNMCDYDVDVSISFTKVIEAEIDIEIIEQTITNLSYQKPKSKTKIVGLKNVLEYFKDKDNLPTYNEVINIMYRRR.

The protein to M.jannaschii MJ0628.

This is an uncharacterized protein from Methanocaldococcus jannaschii (strain ATCC 43067 / DSM 2661 / JAL-1 / JCM 10045 / NBRC 100440) (Methanococcus jannaschii).